Consider the following 415-residue polypeptide: WD repeat and FYVE domain-containing protein 2 (415 aa).

WD repeat units lie at residues 71-103, 119-148, 202-232, and 245-284; these read HHFMPVAPTSLYYSEETYKLLVGLINGNVYEFS, CHAGPISGLGFALSSELIFSCSRDKSIVWH, AHTNAITSLTWDGNKKVLYSGSSDHLIIMWD, and GHNGKVTTLCAAPAAKRLFSADEHGKLMCWDMNCKRVETP. The segment at 286-357 adopts an FYVE-type zinc-finger fold; sequence WKTSDCCQKC…ICNDCNARMK (72 aa). Zn(2+) is bound by residues C292, C295, C319, C322, C327, C330, C349, and C352. A WD 5 repeat occupies 373–403; that stretch reads EIHTGITAMHLQETLGLLVTSGQNRVIMIWD.

Plays a role in coelomocyte endocytosis. The chain is WD repeat and FYVE domain-containing protein 2 (wdfy-2) from Caenorhabditis elegans.